The following is a 63-amino-acid chain: MSGIQLDKETILKYSSAALVALSAVVAVMMVSNNSESWKPILVGAVVAASGAAAYQSWWPKQS.

This Dryophytes versicolor (chameleon treefrog) protein is Transmembrane protein 033R.